Reading from the N-terminus, the 438-residue chain is Tol-Pal system protein TolB (438 aa).

An N-terminal signal peptide occupies residues 1–36; that stretch reads MTPAFRRADLTGFLRTYGAALILLLAAMLAWQPAQA.

It belongs to the TolB family. The Tol-Pal system is composed of five core proteins: the inner membrane proteins TolA, TolQ and TolR, the periplasmic protein TolB and the outer membrane protein Pal. They form a network linking the inner and outer membranes and the peptidoglycan layer.

Its subcellular location is the periplasm. In terms of biological role, part of the Tol-Pal system, which plays a role in outer membrane invagination during cell division and is important for maintaining outer membrane integrity. In Bordetella pertussis (strain Tohama I / ATCC BAA-589 / NCTC 13251), this protein is Tol-Pal system protein TolB.